The sequence spans 370 residues: Platelet-derived growth factor D (370 aa).

The signal sequence occupies residues Met1–Ala23. The region spanning Arg52–Val170 is the CUB domain. Residues Cys109 and Cys131 are joined by a disulfide bond. Asn276 carries an N-linked (GlcNAc...) asparagine glycan. Cystine bridges form between Cys302-Cys360 and Cys306-Cys362.

Belongs to the PDGF/VEGF growth factor family. Homodimer; disulfide-linked. Interacts with PDGFRB homodimers, and with heterodimers formed by PDGFRA and PDGFRB. In terms of processing, activated by proteolytic cleavage. Proteolytic removal of the N-terminal CUB domain releasing the core domain is necessary for unmasking the receptor-binding epitopes of the core domain. Cleavage after Arg-247 or Arg-249 by urokinase plasminogen activator gives rise to the active form. Widely expressed. Expressed at high levels in the kidney, adrenal glands, eye and CNS. In the kidney the localization is confined to arterial and arteriolar vascular smooth muscle cells and is also detected at low levels in the glomeruli In the eye in the anterior segment it is localized to the iris and ciliary body. In the retina localizes intensely to the outer plexiform layer, which contains photoreceptor axons and the synaptic layer between photoreceptors and second order neurons. In the spinal cord, prominently expressed in the motorneurons.

The protein localises to the secreted. In terms of biological role, growth factor that plays an essential role in the regulation of embryonic development, cell proliferation, cell migration, survival and chemotaxis. Potent mitogen for cells of mesenchymal origin. Plays an important role in wound healing. Induces macrophage recruitment, increased interstitial pressure, and blood vessel maturation during angiogenesis. May play an important role in control of lens epithelial cell proliferation. Can initiate events that lead to a mesangial proliferative glomerulonephritis, including influx of monocytes and macrophages and production of extracellular matrix. This chain is Platelet-derived growth factor D (Pdgfd), found in Rattus norvegicus (Rat).